A 1058-amino-acid polypeptide reads, in one-letter code: Carbamoyl phosphate synthase large chain (1058 aa).

The tract at residues 1–401 is carboxyphosphate synthetic domain; it reads MPKRTDIQKI…SLLKACRSLE (401 aa). Residues Arg-129, Arg-169, Gly-175, Gly-176, Arg-208, Ile-210, Glu-215, Gly-241, Ile-242, His-243, Gln-284, and Glu-298 each coordinate ATP. Residues 133 to 327 enclose the ATP-grasp 1 domain; it reads KQLMEELEQP…IAKLAAKIAV (195 aa). Positions 284, 298, and 300 each coordinate Mg(2+). Residues Gln-284, Glu-298, and Asn-300 each contribute to the Mn(2+) site. Residues 402–546 form an oligomerization domain region; the sequence is IGVHHNEIPE…YSTYGWENES (145 aa). Positions 547–929 are carbamoyl phosphate synthetic domain; the sequence is IRSDKESVLV…ALYKAFEASY (383 aa). The ATP-grasp 2 domain occupies 671-861; sequence EQALKELDIP…MAQVATKLIL (191 aa). ATP is bound by residues Arg-707, Ser-746, Ile-748, Glu-752, Gly-777, Val-778, His-779, Ser-780, Gln-820, and Glu-832. Positions 820, 832, and 834 each coordinate Mg(2+). Positions 820, 832, and 834 each coordinate Mn(2+). The 129-residue stretch at 930–1058 folds into the MGS-like domain; the sequence is LHLPTFGNVV…ESRSFVTEAI (129 aa). The allosteric domain stretch occupies residues 930–1058; the sequence is LHLPTFGNVV…ESRSFVTEAI (129 aa).

Belongs to the CarB family. As to quaternary structure, composed of two chains; the small (or glutamine) chain promotes the hydrolysis of glutamine to ammonia, which is used by the large (or ammonia) chain to synthesize carbamoyl phosphate. Tetramer of heterodimers (alpha,beta)4. Mg(2+) serves as cofactor. It depends on Mn(2+) as a cofactor.

It catalyses the reaction hydrogencarbonate + L-glutamine + 2 ATP + H2O = carbamoyl phosphate + L-glutamate + 2 ADP + phosphate + 2 H(+). The catalysed reaction is hydrogencarbonate + NH4(+) + 2 ATP = carbamoyl phosphate + 2 ADP + phosphate + 2 H(+). The protein operates within amino-acid biosynthesis; L-arginine biosynthesis; carbamoyl phosphate from bicarbonate: step 1/1. It functions in the pathway pyrimidine metabolism; UMP biosynthesis via de novo pathway; (S)-dihydroorotate from bicarbonate: step 1/3. Its function is as follows. Large subunit of the glutamine-dependent carbamoyl phosphate synthetase (CPSase). CPSase catalyzes the formation of carbamoyl phosphate from the ammonia moiety of glutamine, carbonate, and phosphate donated by ATP, constituting the first step of 2 biosynthetic pathways, one leading to arginine and/or urea and the other to pyrimidine nucleotides. The large subunit (synthetase) binds the substrates ammonia (free or transferred from glutamine from the small subunit), hydrogencarbonate and ATP and carries out an ATP-coupled ligase reaction, activating hydrogencarbonate by forming carboxy phosphate which reacts with ammonia to form carbamoyl phosphate. The chain is Carbamoyl phosphate synthase large chain from Streptococcus pneumoniae (strain ATCC BAA-255 / R6).